The primary structure comprises 103 residues: Co-chaperonin GroES (103 aa).

This sequence belongs to the GroES chaperonin family. As to quaternary structure, heptamer of 7 subunits arranged in a ring. Interacts with the chaperonin GroEL.

It localises to the cytoplasm. Together with the chaperonin GroEL, plays an essential role in assisting protein folding. The GroEL-GroES system forms a nano-cage that allows encapsulation of the non-native substrate proteins and provides a physical environment optimized to promote and accelerate protein folding. GroES binds to the apical surface of the GroEL ring, thereby capping the opening of the GroEL channel. This is Co-chaperonin GroES from Synechococcus sp. (strain CC9605).